The sequence spans 89 residues: Large ribosomal subunit protein bL27 (89 aa).

The tract at residues 1 to 21 (MAHKKAGGSSRNGRDSESKRL) is disordered.

This sequence belongs to the bacterial ribosomal protein bL27 family.

In Chelativorans sp. (strain BNC1), this protein is Large ribosomal subunit protein bL27.